The primary structure comprises 56 residues: Large ribosomal subunit protein bL33 (56 aa).

This sequence belongs to the bacterial ribosomal protein bL33 family.

This is Large ribosomal subunit protein bL33 from Vibrio campbellii (strain ATCC BAA-1116).